The chain runs to 308 residues: Ornithine carbamoyltransferase (308 aa).

Carbamoyl phosphate is bound by residues 56–59 (STRT), Gln83, Arg107, and 134–137 (HPCQ). Residues Asn165, Asp225, and 229–230 (SM) contribute to the L-ornithine site. Carbamoyl phosphate contacts are provided by residues 266–267 (CL) and Arg294.

It belongs to the aspartate/ornithine carbamoyltransferase superfamily. OTCase family.

Its subcellular location is the cytoplasm. It catalyses the reaction carbamoyl phosphate + L-ornithine = L-citrulline + phosphate + H(+). Its pathway is amino-acid biosynthesis; L-arginine biosynthesis; L-arginine from L-ornithine and carbamoyl phosphate: step 1/3. Functionally, reversibly catalyzes the transfer of the carbamoyl group from carbamoyl phosphate (CP) to the N(epsilon) atom of ornithine (ORN) to produce L-citrulline. The polypeptide is Ornithine carbamoyltransferase (Roseobacter denitrificans (strain ATCC 33942 / OCh 114) (Erythrobacter sp. (strain OCh 114))).